A 566-amino-acid polypeptide reads, in one-letter code: Chromatin assembly factor 1 subunit B (566 aa).

WD repeat units lie at residues 11–54 (HNKE…DGKA), 64–103 (RHTKAVNVVRFSPSGEVLASGGDDAVILLWKLNDSKELEP), 127–166 (GHLEDVYDICWTSDGNYMASASVDNTAIMWDVVKGQKVSI), 169–208 (EHKSYVQGITWDPLGQYIATLSCDRVLRVYNTQTKRVAFN), 228–279 (FHDD…RPMG), and 351–392 (IHYH…IPLK). Disordered regions lie at residues 411 to 481 (KSQP…NQPR) and 501 to 566 (IPLK…KPNK). 2 stretches are compositionally biased toward polar residues: residues 425-437 (TEGTSLSTPTLQP) and 469-478 (QPASQSTKVN).

Belongs to the WD repeat HIR1 family. Interacts with CHAF1A.

The protein localises to the nucleus. In terms of biological role, acts as a component of the histone chaperone complex chromatin assembly factor 1 (CAF-1), which assembles histone octamers onto DNA during replication and repair. CAF-1 performs the first step of the nucleosome assembly process, bringing newly synthesized histones H3 and H4 to replicating DNA; histones H2A/H2B can bind to this chromatin precursor subsequent to DNA replication to complete the histone octamer. This Gallus gallus (Chicken) protein is Chromatin assembly factor 1 subunit B (CHAF1B).